We begin with the raw amino-acid sequence, 171 residues long: 3-hydroxydecanoyl-[acyl-carrier-protein] dehydratase (171 aa).

The active site involves His70.

This sequence belongs to the thioester dehydratase family. FabA subfamily. In terms of assembly, homodimer.

It is found in the cytoplasm. It carries out the reaction a (3R)-hydroxyacyl-[ACP] = a (2E)-enoyl-[ACP] + H2O. The catalysed reaction is (3R)-hydroxydecanoyl-[ACP] = (2E)-decenoyl-[ACP] + H2O. It catalyses the reaction (2E)-decenoyl-[ACP] = (3Z)-decenoyl-[ACP]. It participates in lipid metabolism; fatty acid biosynthesis. Functionally, necessary for the introduction of cis unsaturation into fatty acids. Catalyzes the dehydration of (3R)-3-hydroxydecanoyl-ACP to E-(2)-decenoyl-ACP and then its isomerization to Z-(3)-decenoyl-ACP. Can catalyze the dehydratase reaction for beta-hydroxyacyl-ACPs with saturated chain lengths up to 16:0, being most active on intermediate chain length. This is 3-hydroxydecanoyl-[acyl-carrier-protein] dehydratase from Photobacterium profundum (strain SS9).